The following is an 872-amino-acid chain: MDSRYNPATLEEKWQKTWVELGLDKTQTQSNKPKFYALSMFPYPSGSLHMGHVRNYTITDVIARLKRMQGYRVLHPMGWDAFGLPAENAAIDRGVPPAKWTYQNITQMRQQLQRLGLSIDWDSEVATCSPDYYKWTQWIFLQFLQAGLAYQKEAAVNWDPIDQTVLANEQVDNEGRSWRSGAIVERKLLRQWFLKITDYAEELLNDLDKLTGWPERVKLMQANWIGKSSGAYLEFPIVGSNEKIAVYTTRPDTVYGVSYVVLAPEHPLTKQVTTKTQQAAVDTFIQEVTNQSELERTAEDKPKRGIATGGKAINPFTGEEVPIWIADYVLYEYGTGAVMGVPAHDVRDFKFAQRYDLPIDFVIAAPDDVAGFDLSPTSETEEVTQVVQIEYNQAYTEPGILINSGAFTGMTSTDAKQAIVKYATEKGFGKERIQYRLRDWLISRQRYWGAPIPVIHCPNCGIVPVPDKDLPVILPEEVEFTGRGGSPLAQLESWVNVPCPTCGTPAKRETDTMDTFIDSSWYFLRFTDARNEAQVFESAKTNDWMPVDQYVGGIEHAILHLLYSRFFTKVLRDRGLLNFDEPFERLLTQGMVQGLTYFNPNKGGKDKWVPSHLVNPNDPRDPQTGEPLQRLYATMSKSKGNGVAPEDVIAKYGVDTARMFILFKAPPEKDLEWDEADVEGQFRFLNRVWRLVTDYVASGVNPKNKSGELSKSEKDLRRAIHTAIQSVTEDLEDDYQFNTAISELMKLSNALTDANGKDSRVYAEGIKTLVVLLAPFAPHIAEELWRLLGNSESVHTQTWPAFDPAALVADEITLVIQVNGKKRADIQVPSQADKAELEKYARESEVVQRHLEGKEIKKVIVVPGKLVNFVVG.

The 'HIGH' region signature appears at 42–52 (PYPSGSLHMGH). A 'KMSKS' region motif is present at residues 634 to 638 (TMSKS). Lys637 lines the ATP pocket.

Belongs to the class-I aminoacyl-tRNA synthetase family.

The protein localises to the cytoplasm. The catalysed reaction is tRNA(Leu) + L-leucine + ATP = L-leucyl-tRNA(Leu) + AMP + diphosphate. The protein is Leucine--tRNA ligase of Nostoc sp. (strain PCC 7120 / SAG 25.82 / UTEX 2576).